The sequence spans 90 residues: uncharacterized protein (90 aa).

This is an uncharacterized protein from Saccharolobus islandicus (Sulfolobus islandicus).